The following is a 546-amino-acid chain: MSDPQAALRASWKAVVSDLLAQSEQPNSDVPNFSHSQRLNLQLVEPIMIGDGYALIAAPHENAKTVIETELGEYITRALSQHMGRPCSLAVTIAAPPQPAPQEEPPAPAPQRPIQTEAPEHGMGHQTQAFQQPTQSTQPAPASQPETPNHHQPRSWEAAHSPASLDELAQHYSEQQSTAPSGYPEATGARIPREEPAHNPNREKSLNPKHTFENFVIGSSNRFANGAAVAVAENPARAYNPLFIWGGSGLGKTHLLHAAGNYAQVLHPGLRVKYVSSEEFTNDYINSLRDDRQESFKRRYRNLDILMVDDIQFLEGKESTQEEFFHTFNALHQANKQIILSSDRPPKQLTTLEDRLRTRFEGGLITDIQPPDLETRIAILMKKASADGTDVDRSVLELIASRFESSIRELEGALIRVSAYSSLVNEPISLEMAEIALHDLAPDSADRQITAAAIIEVTADYFNIDVDTLRGSGKKRAVAHARQLAMYLCRELTELSLPKIGDQFGGKDHTTVIYADRKIRKEMTENRNTYDEIQALTQRVKNHNQR.

Residues 1 to 85 (MSDPQAALRA…TRALSQHMGR (85 aa)) form a domain I, interacts with DnaA modulators region. Residues 85-204 (RPCSLAVTIA…EPAHNPNREK (120 aa)) are domain II. The segment covering 96–111 (PPQPAPQEEPPAPAPQ) has biased composition (pro residues). The tract at residues 96-209 (PPQPAPQEEP…PNREKSLNPK (114 aa)) is disordered. Positions 126–145 (QTQAFQQPTQSTQPAPASQP) are enriched in low complexity. The segment covering 191-209 (IPREEPAHNPNREKSLNPK) has biased composition (basic and acidic residues). The domain III, AAA+ region stretch occupies residues 205–421 (SLNPKHTFEN…GALIRVSAYS (217 aa)). ATP-binding residues include G249, G251, K252, and T253. The tract at residues 422–546 (SLVNEPISLE…TQRVKNHNQR (125 aa)) is domain IV, binds dsDNA.

This sequence belongs to the DnaA family. Oligomerizes as a right-handed, spiral filament on DNA at oriC.

The protein resides in the cytoplasm. In terms of biological role, plays an essential role in the initiation and regulation of chromosomal replication. ATP-DnaA binds to the origin of replication (oriC) to initiate formation of the DNA replication initiation complex once per cell cycle. Binds the DnaA box (a 9 base pair repeat at the origin) and separates the double-stranded (ds)DNA. Forms a right-handed helical filament on oriC DNA; dsDNA binds to the exterior of the filament while single-stranded (ss)DNA is stabiized in the filament's interior. The ATP-DnaA-oriC complex binds and stabilizes one strand of the AT-rich DNA unwinding element (DUE), permitting loading of DNA polymerase. After initiation quickly degrades to an ADP-DnaA complex that is not apt for DNA replication. Binds acidic phospholipids. In Corynebacterium aurimucosum (strain ATCC 700975 / DSM 44827 / CIP 107346 / CN-1) (Corynebacterium nigricans), this protein is Chromosomal replication initiator protein DnaA.